Reading from the N-terminus, the 262-residue chain is Ribosome-recycling factor, mitochondrial (262 aa).

The transit peptide at 1 to 55 (MALGLRCFRLVHPAFCNSLAALTRPVSEVTLQTVRGRQNDHGQCMAYAAVPVRHF) directs the protein to the mitochondrion.

This sequence belongs to the RRF family.

Its subcellular location is the mitochondrion. Its function is as follows. Responsible for the disassembly of ribosomes from messenger RNA at the termination of mitochondrial protein biosynthesis. Acts in collaboration with GFM2. Promotes mitochondrial ribosome recycling by dissolution of intersubunit contacts. In Bos taurus (Bovine), this protein is Ribosome-recycling factor, mitochondrial (MRRF).